The chain runs to 195 residues: 3-isopropylmalate dehydratase small subunit (195 aa).

The protein belongs to the LeuD family. LeuD type 1 subfamily. As to quaternary structure, heterodimer of LeuC and LeuD.

The catalysed reaction is (2R,3S)-3-isopropylmalate = (2S)-2-isopropylmalate. Its pathway is amino-acid biosynthesis; L-leucine biosynthesis; L-leucine from 3-methyl-2-oxobutanoate: step 2/4. Functionally, catalyzes the isomerization between 2-isopropylmalate and 3-isopropylmalate, via the formation of 2-isopropylmaleate. The sequence is that of 3-isopropylmalate dehydratase small subunit from Rubrobacter xylanophilus (strain DSM 9941 / JCM 11954 / NBRC 16129 / PRD-1).